The chain runs to 336 residues: uncharacterized protein (336 aa).

Belongs to the GppA/Ppx family.

This is an uncharacterized protein from Streptomyces coelicolor (strain ATCC BAA-471 / A3(2) / M145).